A 534-amino-acid chain; its full sequence is Bifunctional pantoate ligase/cytidylate kinase (534 aa).

The tract at residues 1 to 302 (MRLLTTVAAL…LGSTRLIDNT (302 aa)) is pantoate--beta-alanine ligase. 48–55 (MGSLHQGH) is an ATP binding site. The Proton donor role is filled by histidine 55. Glutamine 79 provides a ligand contact to (R)-pantoate. Glutamine 79 is a beta-alanine binding site. 172 to 175 (GQKD) contributes to the ATP binding site. Residue glutamine 178 participates in (R)-pantoate binding. Residues valine 201 and 209-212 (CSSR) each bind ATP. Residues 303–534 (ILRDRQPIIA…DYYQQRLSQW (232 aa)) form a cytidylate kinase region.

The protein in the N-terminal section; belongs to the pantothenate synthetase family. This sequence in the C-terminal section; belongs to the cytidylate kinase family. Type 1 subfamily.

It is found in the cytoplasm. It catalyses the reaction (R)-pantoate + beta-alanine + ATP = (R)-pantothenate + AMP + diphosphate + H(+). The enzyme catalyses CMP + ATP = CDP + ADP. The catalysed reaction is dCMP + ATP = dCDP + ADP. It participates in cofactor biosynthesis; (R)-pantothenate biosynthesis; (R)-pantothenate from (R)-pantoate and beta-alanine: step 1/1. Its function is as follows. Catalyzes the condensation of pantoate with beta-alanine in an ATP-dependent reaction via a pantoyl-adenylate intermediate. In terms of biological role, catalyzes the transfer of a phosphate group from ATP to either CMP or dCMP to form CDP or dCDP and ADP, respectively. This is Bifunctional pantoate ligase/cytidylate kinase from Trichormus variabilis (strain ATCC 29413 / PCC 7937) (Anabaena variabilis).